The following is a 112-amino-acid chain: Cytochrome c type-1 (112 aa).

Heme c contacts are provided by cysteine 20, cysteine 23, histidine 24, and methionine 85.

Binds 1 heme c group covalently per subunit.

The protein localises to the mitochondrion intermembrane space. Functionally, electron carrier between complex III (ubiquinol-cytochrome c oxireductase) and complex IV (cytochrome c oxidase). The protein is Cytochrome c type-1 of Ascaris suum (Pig roundworm).